The primary structure comprises 332 residues: 2,3-diketo-L-gulonate reductase (332 aa).

H44 (proton donor) is an active-site residue. Residues 168-174 (ITMVDMS), 224-225 (WK), and 304-306 (GHE) contribute to the NAD(+) site.

The protein belongs to the LDH2/MDH2 oxidoreductase family. DlgD subfamily. As to quaternary structure, homodimer.

It localises to the cytoplasm. The catalysed reaction is 3-dehydro-L-gulonate + NAD(+) = 2,3-dioxo-L-gulonate + NADH + H(+). It carries out the reaction 3-dehydro-L-gulonate + NADP(+) = 2,3-dioxo-L-gulonate + NADPH + H(+). Catalyzes the reduction of 2,3-diketo-L-gulonate in the presence of NADH, to form 3-keto-L-gulonate. The chain is 2,3-diketo-L-gulonate reductase from Salmonella newport (strain SL254).